Consider the following 259-residue polypeptide: Phosphatidylglycerol--prolipoprotein diacylglyceryl transferase (259 aa).

A run of 4 helical transmembrane segments spans residues 12–32 (LSLHWYAVCILVGLLLAVYLA), 46–66 (IIDFILIAFPLAIIGARIYYV), 83–103 (IWNGGIAIYGGLITGTIVLFV), and 109–129 (VLNPIHFLDIAAPSVMLAQAI). R131 serves as a coordination point for a 1,2-diacyl-sn-glycero-3-phospho-(1'-sn-glycerol). 3 consecutive transmembrane segments (helical) span residues 167-187 (VPTFLYESMWNLIGFVIIMVW), 194-214 (LLDGDIISFYLIWYGCGRLVI), and 226-246 (GIRVSQYVSVLLIIIAIVFIF).

The protein belongs to the Lgt family.

It is found in the cell membrane. The enzyme catalyses L-cysteinyl-[prolipoprotein] + a 1,2-diacyl-sn-glycero-3-phospho-(1'-sn-glycerol) = an S-1,2-diacyl-sn-glyceryl-L-cysteinyl-[prolipoprotein] + sn-glycerol 1-phosphate + H(+). It functions in the pathway protein modification; lipoprotein biosynthesis (diacylglyceryl transfer). Catalyzes the transfer of the diacylglyceryl group from phosphatidylglycerol to the sulfhydryl group of the N-terminal cysteine of a prolipoprotein, the first step in the formation of mature lipoproteins. The protein is Phosphatidylglycerol--prolipoprotein diacylglyceryl transferase of Streptococcus equi subsp. zooepidemicus (strain H70).